An 81-amino-acid chain; its full sequence is MEGAGAGSGFRKELVSRLLHLHFKDDKTKVSGDALQLMVELLKVFVVEAAVRGVRQAQAEDALRVDVDQLEKVLPQLLLDF.

An N-acetylmethionine modification is found at methionine 1.

Belongs to the CENP-X/MHF2 family. Heterodimer with CENPX, sometimes called MHF; this interaction stabilizes both partners. MHF heterodimers can assemble to form tetrameric structures. MHF also coassemble with CENPT-CENPW heterodimers at centromeres to form the tetrameric CENP-T-W-S-X complex. Forms a discrete complex with FANCM and CENPX, called FANCM-MHF; this interaction, probably mediated by direct binding between CENPS and FANCM, leads to synergistic activation of double-stranded DNA binding and strongly stimulates FANCM-mediated DNA remodeling. Recruited by FANCM to the Fanconi anemia (FA) core complex, which consists of CENPS, CENPX, FANCA, FANCB, FANCC, FANCE, FANCF, FANCG, FANCL, FANCM, FAAP24 and FAAP100. The FA core complex associates with Bloom syndrome (BLM) complex, which consists of at least BLM, DNA topoisomerase 3-alpha (TOP3A), RMI1/BLAP75, RPA1/RPA70 and RPA2/RPA32. The super complex between FA and BLM is called BRAFT.

The protein localises to the nucleus. The protein resides in the chromosome. It localises to the centromere. Its subcellular location is the kinetochore. DNA-binding component of the Fanconi anemia (FA) core complex. Required for the normal activation of the FA pathway, leading to monoubiquitination of the FANCI-FANCD2 complex in response to DNA damage, cellular resistance to DNA cross-linking drugs, and prevention of chromosomal breakage. In complex with CENPS (MHF heterodimer), crucial cofactor for FANCM in both binding and ATP-dependent remodeling of DNA. Stabilizes FANCM. In complex with CENPS and FANCM (but not other FANC proteins), rapidly recruited to blocked forks and promotes gene conversion at blocked replication forks. In complex with CENPS, CENPT and CENPW (CENP-T-W-S-X heterotetramer), involved in the formation of a functional kinetochore outer plate, which is essential for kinetochore-microtubule attachment and faithful mitotic progression. As a component of MHF and CENP-T-W-S-X complexes, binds DNA and bends it to form a nucleosome-like structure. DNA-binding function is fulfilled in the presence of CENPS, with the following preference for DNA substates: Holliday junction &gt; double-stranded &gt; splay arm &gt; single-stranded. Does not bind DNA on its own. The sequence is that of Centromere protein X (CENPX) from Homo sapiens (Human).